The sequence spans 232 residues: UPF0173 metal-dependent hydrolase Msil_0741 (232 aa).

This sequence belongs to the UPF0173 family.

In Methylocella silvestris (strain DSM 15510 / CIP 108128 / LMG 27833 / NCIMB 13906 / BL2), this protein is UPF0173 metal-dependent hydrolase Msil_0741.